Reading from the N-terminus, the 88-residue chain is Serine protease inhibitor Kazal-type 11 (88 aa).

Positions 1–24 (MSSTWIKFLFILTLVLLPYFVAES) are cleaved as a signal peptide. Positions 32-87 (LRKVPNCTLYKSESDCSRTLIPVCADNQMTYYNACYFCLEQLVSPIKYKYHGICTK) constitute a Kazal-like domain. An N-linked (GlcNAc...) asparagine glycan is attached at Asn37. Cystine bridges form between Cys38-Cys69, Cys47-Cys66, and Cys55-Cys85.

In terms of tissue distribution, expressed in epydiymis, in the caput. Also expressed in seminal vesicles.

It is found in the secreted. Functionally, probable serine protease inhibitor. In Mus musculus (Mouse), this protein is Serine protease inhibitor Kazal-type 11 (Spink11).